A 391-amino-acid chain; its full sequence is Pepsin B (391 aa).

The signal sequence occupies residues 1–16 (MKCLILALICLQLSEG). A propeptide spans 17 to 60 (LVVRQILHKGKSIRERMEENGVLEDFLRYNKKADPAAKFLFNKD) (activation peptide). The region spanning 75 to 388 (YFGEISIGTP…DMANNRVGFA (314 aa)) is the Peptidase A1 domain. D93 is a catalytic residue. Cystine bridges form between C106–C111 and C270–C274. D279 is an active-site residue. C313 and C346 form a disulfide bridge.

The protein belongs to the peptidase A1 family.

The protein resides in the secreted. It catalyses the reaction Degradation of gelatin, little activity on hemoglobin. Specificity on B chain of insulin more restricted than that of pepsin A. Does not cleave 1-Phe-|-Val-2, 4-Gln-|-His-5 or 23-Gly-|-Phe-24.. Functionally, hydrolyzes various peptides including beta-endorphin, insulin B chain, dynorphin A, and neurokinin A, with high specificity for the cleavage of the Phe-Xaa bonds. The chain is Pepsin B from Monodelphis domestica (Gray short-tailed opossum).